Here is a 442-residue protein sequence, read N- to C-terminus: MDLLLGVLSSGILQNALPFVAGVGRVKRPKRVKLEEAFREAHLCRPVIPYRAPTPYTGGRVKALFVGINYTGTRNKLSGCVNDVRQMLGTLQRIQFPISECCILVDDMRFPNFTALPTRENIIKHMAWLVHDVRPGDVLFFHYSGHGTETKAERDSEELYDQCLVPLDYQVQGAILDDDLFELLVKGLPAGVRMTAVFDCCHSASLLDLPFAFVGNNNFYSGGRHEMRKVRANNFSMGDVVVFSGCDDSGTSADVSNVSSFGSGLVASGGAATQALTWALVNTSQLSYADIFIRTREILRQKGYKQVPQLSSSKPVDLYKPFSLFGPITVNTSLIHYVPQQYLQPWGPPQPYYPPPQPQQPYYPPPQPQQPYYPSSQLPTQYNNLAPTAGIPLMTSSSEVPPGQYPQALSGDQNGGVPPQYPSDQSTYYSSAQYLSGVGKPL.

The N-terminal stretch at 1–18 (MDLLLGVLSSGILQNALP) is a signal peptide. The segment at 19 to 62 (FVAGVGRVKRPKRVKLEEAFREAHLCRPVIPYRAPTPYTGGRVK) is important for catalytic activity. N69 and N112 each carry an N-linked (GlcNAc...) asparagine glycan. Residue H146 is part of the active site. Positions 161, 177, and 178 each coordinate Ca(2+). C201 is an active-site residue. D208 contributes to the Ca(2+) binding site. N-linked (GlcNAc...) asparagine glycosylation is found at N234, N257, N282, and N331. The segment at 336–442 (HYVPQQYLQP…QYLSGVGKPL (107 aa)) is negatively regulates catalytic activity. Over residues 348 to 371 (PPQPYYPPPQPQQPYYPPPQPQQP) the composition is skewed to pro residues. A disordered region spans residues 348–442 (PPQPYYPPPQ…QYLSGVGKPL (95 aa)). Over residues 372-382 (YYPSSQLPTQY) the composition is skewed to low complexity. Polar residues predominate over residues 422 to 434 (PSDQSTYYSSAQY).

The protein belongs to the peptidase C14B family. Post-translationally, in epimastigotes, the unprocessed enzyme appears to be the main form. Auto-processing is dispensable for catalytic activity towards small oligopeptide substrates.

It is found in the recycling endosome. Activated by Ca(2+). Functionally, cysteine protease that cleaves specifically after arginine or lysine residues. May play a role in apoptosis. The protein is Metacaspase-5 of Trypanosoma cruzi (strain CL Brener).